A 190-amino-acid polypeptide reads, in one-letter code: Flavodoxin-like domain-containing protein BilS (190 aa).

It participates in porphyrin-containing compound metabolism; protoheme degradation. In terms of biological role, together with BilR, catalyzes reduction of mesobilirubin and/or bilirubin to urobilinogen, a key step during heme degradation. BilS is probably involved in electron transfer for the bilirubin reductase BilR. The polypeptide is Flavodoxin-like domain-containing protein BilS (Clostridium symbiosum (strain WAL-14163)).